The chain runs to 212 residues: MEPLYQQTNKQVQEIQSHMGRLERADKQSVHLVENEIQASIEQIFSHLERLEILSSKEPLNRRQNAKLRVDQLKYDVQHLQTALRNFQHRRQVREQQERQRDELLSRTFTTNDSDTTIPMDESLQFNSSLHNIHHGMDDLIGGGHSILEGLRAQRLTLKGTQKKILDIANMLGLSNTVMRLIEKRAFQDKYFMIGGMLLTCAVMFLVVQYLT.

Methionine 1 bears the N-acetylmethionine mark. The Cytoplasmic portion of the chain corresponds to methionine 1–lysine 190. Residues leucine 60 to glutamine 92 are a coiled coil. The IxM motif; signal for cargo packaging into COPII-coated vesicles motif lies at isoleucine 118–methionine 120. The helical; Anchor for type IV membrane protein transmembrane segment at tyrosine 191 to leucine 211 threads the bilayer. Residue threonine 212 is a topological domain, vesicular.

It belongs to the GOSR2 family. As to quaternary structure, part of a unique SNARE complex composed of the Golgi SNAREs GOSR1, STX5 and YKT6. Interacts with BET1.

It is found in the golgi apparatus. It localises to the cis-Golgi network membrane. Its subcellular location is the golgi apparatus membrane. The protein localises to the endoplasmic reticulum membrane. Its function is as follows. Involved in transport of proteins from the cis/medial-Golgi to the trans-Golgi network. The chain is Golgi SNAP receptor complex member 2 (Gosr2) from Mus musculus (Mouse).